Consider the following 349-residue polypeptide: Ferredoxin--NADP reductase (349 aa).

7 residues coordinate FAD: Asp-35, Gln-43, Tyr-48, Val-88, Phe-123, Asp-288, and Thr-329.

The protein belongs to the ferredoxin--NADP reductase type 2 family. In terms of assembly, homodimer. Requires FAD as cofactor.

The catalysed reaction is 2 reduced [2Fe-2S]-[ferredoxin] + NADP(+) + H(+) = 2 oxidized [2Fe-2S]-[ferredoxin] + NADPH. The polypeptide is Ferredoxin--NADP reductase (Colwellia psychrerythraea (strain 34H / ATCC BAA-681) (Vibrio psychroerythus)).